A 371-amino-acid chain; its full sequence is MAKQTPLYQQHLADGAKMVDFHGWMMPLHYGSQLDEHHIVRRDAGIFDVSHMTIVDLHGVRTREFLRYLLANDVAKLTQPGKALYTGMLNASGGVIDDLIVYFLTEDYFRLVVNSATREKDLAWIEQHAAAFGVDIRERDELALVAVQGPQAQEKVQGLLKAKGLSDEDVAAVASMKPFFGKQAGDFFVATTGYTGEAGYEIALPNEQVVDFWQQLLAVGVKPCGLGARDTLRLEAGMNLYGQDMDEGISPLAANMGWTIAWQPEDRQFIGREALVHQREKGTEQLVGLVLTEKGVLRNDLSVRFTDSDGVMREGVITSGSFSPTLGVSIALARVPAGIGEQAIVQIRNRELPVRVTKPGFVRAGKAIVQY.

Belongs to the GcvT family. As to quaternary structure, the glycine cleavage system is composed of four proteins: P, T, L and H.

The catalysed reaction is N(6)-[(R)-S(8)-aminomethyldihydrolipoyl]-L-lysyl-[protein] + (6S)-5,6,7,8-tetrahydrofolate = N(6)-[(R)-dihydrolipoyl]-L-lysyl-[protein] + (6R)-5,10-methylene-5,6,7,8-tetrahydrofolate + NH4(+). The glycine cleavage system catalyzes the degradation of glycine. The sequence is that of Aminomethyltransferase from Pectobacterium atrosepticum (strain SCRI 1043 / ATCC BAA-672) (Erwinia carotovora subsp. atroseptica).